Here is a 255-residue protein sequence, read N- to C-terminus: Acetylglutamate kinase (255 aa).

Substrate is bound by residues 40-41 (GG), R62, and N153.

Belongs to the acetylglutamate kinase family. ArgB subfamily.

It is found in the cytoplasm. The catalysed reaction is N-acetyl-L-glutamate + ATP = N-acetyl-L-glutamyl 5-phosphate + ADP. It participates in amino-acid biosynthesis; L-arginine biosynthesis; N(2)-acetyl-L-ornithine from L-glutamate: step 2/4. In terms of biological role, catalyzes the ATP-dependent phosphorylation of N-acetyl-L-glutamate. The polypeptide is Acetylglutamate kinase (Bacillus cereus (strain AH187)).